A 235-amino-acid polypeptide reads, in one-letter code: Putative N-acetylmannosamine-6-phosphate 2-epimerase (235 aa).

Belongs to the NanE family.

The catalysed reaction is an N-acyl-D-glucosamine 6-phosphate = an N-acyl-D-mannosamine 6-phosphate. The protein operates within amino-sugar metabolism; N-acetylneuraminate degradation; D-fructose 6-phosphate from N-acetylneuraminate: step 3/5. In terms of biological role, converts N-acetylmannosamine-6-phosphate (ManNAc-6-P) to N-acetylglucosamine-6-phosphate (GlcNAc-6-P). The polypeptide is Putative N-acetylmannosamine-6-phosphate 2-epimerase (Edwardsiella ictaluri (strain 93-146)).